Consider the following 624-residue polypeptide: Pentatricopeptide repeat-containing protein At4g31070, mitochondrial (624 aa).

A mitochondrion-targeting transit peptide spans 1–15; that stretch reads MRWVKLGRRVIMSRA. PPR repeat units follow at residues 56–91, 92–122, 123–157, 158–192, 195–225, 226–260, 261–296, 297–327, 328–362, 363–397, 398–428, 429–463, 464–498, and 499–529; these read FTAI…GADC, DTVV…MLHR, DTVS…GFIP, KSEL…DERM, SVLL…MEVK, NEVS…NLRP, NRVT…GCHA, DERL…SKVR, DVVM…GIEA, NSVT…GFMS, HILL…LTEK, DLVS…GHEV, DDMA…HMPV, and TLEH…MPMK. The tract at residues 534 to 610 is type E motif; sequence IWSSLLSACE…CYGFSKIEPE (77 aa).

The protein belongs to the PPR family. PCMP-E subfamily.

The protein resides in the mitochondrion. In Arabidopsis thaliana (Mouse-ear cress), this protein is Pentatricopeptide repeat-containing protein At4g31070, mitochondrial (PCMP-E7).